We begin with the raw amino-acid sequence, 547 residues long: Chaperonin GroEL (547 aa).

ATP is bound by residues 30–33 (TLGP), Lys-51, 87–91 (DGTTT), Gly-415, and Asp-496.

Belongs to the chaperonin (HSP60) family. As to quaternary structure, forms a cylinder of 14 subunits composed of two heptameric rings stacked back-to-back. Interacts with the co-chaperonin GroES.

It is found in the cytoplasm. It catalyses the reaction ATP + H2O + a folded polypeptide = ADP + phosphate + an unfolded polypeptide.. Functionally, together with its co-chaperonin GroES, plays an essential role in assisting protein folding. The GroEL-GroES system forms a nano-cage that allows encapsulation of the non-native substrate proteins and provides a physical environment optimized to promote and accelerate protein folding. This chain is Chaperonin GroEL, found in Actinobacillus pleuropneumoniae (Haemophilus pleuropneumoniae).